Consider the following 755-residue polypeptide: Lysosome membrane protein 2-B (755 aa).

Topologically, residues 1–6 are cytoplasmic; it reads MKHIGR. A helical transmembrane segment spans residues 7 to 27; it reads IVSFPIGLVLIAVGIIIFVVV. N-linked (GlcNAc...) asparagine glycosylation is found at N28, N76, N379, N465, N497, N588, N607, and N680. Topologically, residues 28 to 727 are lumenal; sequence NRTIKDEFKK…AYKVDSFRYA (700 aa). Residues 728 to 748 traverse the membrane as a helical segment; the sequence is ITVILIVVGGFLSLISGGLFV. Topologically, residues 749-755 are cytoplasmic; the sequence is LDKIIDL. Positions 752 to 753 match the Di-leucine motif motif; the sequence is II.

It belongs to the CD36 family. In terms of processing, heavily glycosylated.

It localises to the lysosome membrane. Its function is as follows. May act as a lysosomal receptor. May be involved in macropinocytosis and fluid phase exocytosis. The polypeptide is Lysosome membrane protein 2-B (lmpB) (Dictyostelium discoideum (Social amoeba)).